Reading from the N-terminus, the 32-residue chain is Protamine S4 (32 aa).

The interval 1 to 32 is disordered; it reads GCKKRKARKRPKCKKARKRPKCKRRKVAKKKC.

In terms of tissue distribution, testis.

The protein resides in the nucleus. Its subcellular location is the chromosome. Functionally, protamines substitute for histones in the chromatin of sperm during the haploid phase of spermatogenesis. They compact sperm DNA into a highly condensed, stable and inactive complex. The sequence is that of Protamine S4 from Scyliorhinus canicula (Small-spotted catshark).